Here is a 226-residue protein sequence, read N- to C-terminus: Glycerol-3-phosphate acyltransferase (226 aa).

6 helical membrane passes run 1 to 21, 56 to 76, 102 to 122, 134 to 154, 159 to 178, and 182 to 197; these read MGLW…LGSF, GPGA…IALV, LVTL…FLGF, ILLA…AVVV, IVSL…MVVL, and LPYI…YVIL.

Belongs to the PlsY family. As to quaternary structure, probably interacts with PlsX.

It localises to the cell inner membrane. It carries out the reaction an acyl phosphate + sn-glycerol 3-phosphate = a 1-acyl-sn-glycero-3-phosphate + phosphate. It participates in lipid metabolism; phospholipid metabolism. In terms of biological role, catalyzes the transfer of an acyl group from acyl-phosphate (acyl-PO(4)) to glycerol-3-phosphate (G3P) to form lysophosphatidic acid (LPA). This enzyme utilizes acyl-phosphate as fatty acyl donor, but not acyl-CoA or acyl-ACP. The sequence is that of Glycerol-3-phosphate acyltransferase from Trichormus variabilis (strain ATCC 29413 / PCC 7937) (Anabaena variabilis).